A 228-amino-acid chain; its full sequence is Deoxyguanosine kinase (228 aa).

8–16 (GPIGAGKSS) provides a ligand contact to ATP. The substrate site is built by Glu-32, Tyr-44, and Gln-55. Asp-78 (proton acceptor) is an active-site residue. 3 residues coordinate substrate: Arg-79, Asp-84, and Glu-149.

Belongs to the DCK/DGK family. Heterodimer of a deoxyadenosine (DAK) and a deoxyguanosine kinase (DGK).

It catalyses the reaction 2'-deoxyguanosine + ATP = dGMP + ADP + H(+). In terms of biological role, DGK/DAK plays an essential role in generating the deoxyribonucleotide precursors, dGTP and dATP, for DNA metabolism. This Lactobacillus acidophilus (strain ATCC 700396 / NCK56 / N2 / NCFM) protein is Deoxyguanosine kinase.